The chain runs to 219 residues: Ribose-5-phosphate isomerase A (219 aa).

Residues 28-31 (SGST), 81-84 (DGAD), and 94-97 (KGGG) each bind substrate. The active-site Proton acceptor is the glutamate 103. Substrate is bound at residue lysine 121.

It belongs to the ribose 5-phosphate isomerase family. In terms of assembly, homodimer.

The catalysed reaction is aldehydo-D-ribose 5-phosphate = D-ribulose 5-phosphate. The protein operates within carbohydrate degradation; pentose phosphate pathway; D-ribose 5-phosphate from D-ribulose 5-phosphate (non-oxidative stage): step 1/1. Its function is as follows. Catalyzes the reversible conversion of ribose-5-phosphate to ribulose 5-phosphate. The chain is Ribose-5-phosphate isomerase A from Histophilus somni (strain 129Pt) (Haemophilus somnus).